A 159-amino-acid chain; its full sequence is Phosphopantetheine adenylyltransferase (159 aa).

Serine 8 serves as a coordination point for substrate. ATP is bound by residues 8–9 (SF) and histidine 16. Residues lysine 40, threonine 72, and arginine 86 each coordinate substrate. Residues 87 to 89 (GLR), glutamate 97, and 122 to 128 (YSFLSSS) each bind ATP.

Belongs to the bacterial CoaD family. Homohexamer. The cofactor is Mg(2+).

Its subcellular location is the cytoplasm. It carries out the reaction (R)-4'-phosphopantetheine + ATP + H(+) = 3'-dephospho-CoA + diphosphate. The protein operates within cofactor biosynthesis; coenzyme A biosynthesis; CoA from (R)-pantothenate: step 4/5. Reversibly transfers an adenylyl group from ATP to 4'-phosphopantetheine, yielding dephospho-CoA (dPCoA) and pyrophosphate. This Synechocystis sp. (strain ATCC 27184 / PCC 6803 / Kazusa) protein is Phosphopantetheine adenylyltransferase.